A 610-amino-acid chain; its full sequence is Ubiquilin-like protein (610 aa).

One can recognise a Ubiquitin-like domain in the interval 31–105 (IRVIVKTPGN…IHVVIKSKHG (75 aa)). The region spanning 562–607 (QAPEVRFSKEMECLQAMGFVNYNANLQALIATDGDTNAAIYKLKSS) is the UBA domain.

In Mus musculus (Mouse), this protein is Ubiquilin-like protein (Ubqlnl).